An 850-amino-acid polypeptide reads, in one-letter code: DNA mismatch repair protein MutS (850 aa).

608–615 (GPNMGGKS) serves as a coordination point for ATP.

It belongs to the DNA mismatch repair MutS family.

In terms of biological role, this protein is involved in the repair of mismatches in DNA. It is possible that it carries out the mismatch recognition step. This protein has a weak ATPase activity. The sequence is that of DNA mismatch repair protein MutS from Thiobacillus denitrificans (strain ATCC 25259 / T1).